The chain runs to 1019 residues: MVLASFLVSGLVLGLLAQKMRPVQSKGVDLGLCDETRFECKCGDPGYVFNIPVKQCTYFYRWRPYCKPCDDLEAKDICPKYKRCQECKAGLDSCVTCPPNKYGTWCSGECQCKNGGICDQRTGACACRDRYEGVHCEILKGCPLLPSDSQVQEVRNPPDNPQTIDYSCSPGFKLKGMARISCLPNGQWSNFPPKCIRECAMVSSPEHGKVNALSGDMIEGATLRFSCDSPYYLIGQETLTCQGNGQWNGQIPQCKNLVFCPDLDPVNHAEHKVKIGVEQKYGQFPQGTEVTYTCSGNYFLMGFDTLKCNPDGSWSGSQPSCVKVADREVDCDSKAVDFLDDVGEPVRIHCPAGCSLTAGTVWGTAIYHELSSVCRAAIHAGKLPNSGGAVHVVNNGPYSDFLGSDLNGIKSEELKSLARSFRFDYVRSSTAGKSGCPDGWFEVDENCVYVTSKQRAWERAQGVCTNMAARLAVLDKDVIPNSLTETLRGKGLTTTWIGLHRLDAEKPFIWELMDRSNVVLNDNLTFWASGEPGNETNCVYMDIQDQLQSVWKTKSCFQPSSFACMMDLSDRNKAKCDDPGSLENGHATLHGQSIDGFYAGSSIRYSCEVLHYLSGTETVTCTTNGTWSAPKPRCIKVITCQNPPVPSYGSVEIKPPSRTNSISRVGSPFLRLPRLPLPLARAAKPPPKPRSSQPSTVDLASKVKLPEGHYRVGSRAIYTCESRYYELLGSQGRRCDSNGNWSGRPASCIPVCGRSDSPRSPFIWNGNSTEIGQWPWQAGISRWLADHNMWFLQCGGSLLNEKWIVTAAHCVTYSATAEIIDPNQFKMYLGKYYRDDSRDDDYVQVREALEIHVNPNYDPGNLNFDIALIQLKTPVTLTTRVQPICLPTDITTREHLKEGTLAVVTGWGLNENNTYSETIQQAVLPVVAASTCEEGYKEADLPLTVTENMFCAGYKKGRYDACSGDSGGPLVFADDSRTERRWVLEGIVSWGSPSGCGKANQYGGFTKVNVFLSWIRQFI.

The first 25 residues, 1–25 (MVLASFLVSGLVLGLLAQKMRPVQS), serve as a signal peptide directing secretion. Residues 102-137 (YGTWCSGECQCKNGGICDQRTGACACRDRYEGVHCE) enclose the EGF-like domain. Intrachain disulfides connect C106–C118, C112–C125, C127–C136, C142–C182, C168–C195, C199–C241, C227–C254, C260–C308, C294–C321, C331–C350, C354–C374, C436–C447, C464–C564, C538–C556, C576–C621, C607–C634, and C720–C748. 3 consecutive Sushi domains span residues 140-197 (KGCP…KCIR), 198-256 (ECAM…QCKN), and 258-323 (VFCP…SCVK). Residues 325 to 421 (ADREVDCDSK…EELKSLARSF (97 aa)) form the LCCL domain. In terms of domain architecture, C-type lectin spans 436–568 (CPDGWFEVDE…PSSFACMMDL (133 aa)). 2 N-linked (GlcNAc...) asparagine glycosylation sites follow: N523 and N534. 2 Sushi domains span residues 574 to 636 (AKCD…RCIK) and 689 to 750 (PRSS…SCIP). 3 N-linked (GlcNAc...) asparagine glycosylation sites follow: N624, N740, and N767. One can recognise a Peptidase S1 domain in the interval 763-1019 (IWNGNSTEIG…VFLSWIRQFI (257 aa)). The cysteines at positions 794 and 810 are disulfide-linked. Residues H809 and D865 each act as charge relay system in the active site. N-linked (GlcNAc...) asparagine glycosylation occurs at N912. C932 and C951 are oxidised to a cystine. D960 serves as a coordination point for substrate. C962 and C996 form a disulfide bridge. Residue S966 is the Charge relay system of the active site.

Belongs to the peptidase S1 family. In terms of assembly, heterodimer of a light chain and a heavy chain linked by a disulfide bond.

It localises to the secreted. It carries out the reaction Selective cleavage of 103-Arg-|-Ser-104 and 124-Ile-|-Ile-125 bonds in Limulus clotting factor B to form activated factor B. Cleavage of -Pro-Arg-|-Xaa- bonds in synthetic substrates.. Activated by Gram-negative bacterial lipopolysaccharides and chymotrypsin. Its function is as follows. This enzyme is closely associated with an endotoxin-sensitive hemolymph coagulation system which may play important roles in both hemostasis and host defense mechanisms. Its active form catalyzes the activation of factor B. This Carcinoscorpius rotundicauda (Mangrove horseshoe crab) protein is Limulus clotting factor C.